Reading from the N-terminus, the 590-residue chain is Aspartate--tRNA ligase (590 aa).

Glu174 lines the L-aspartate pocket. An aspartate region spans residues Gln198–Lys201. Arg220 is a binding site for L-aspartate. Residues Arg220–Glu222 and Gln229 contribute to the ATP site. His443 serves as a coordination point for L-aspartate. An ATP-binding site is contributed by Glu484. Arg491 contributes to the L-aspartate binding site. Residue Gly536 to Arg539 coordinates ATP.

The protein belongs to the class-II aminoacyl-tRNA synthetase family. Type 1 subfamily. Homodimer.

The protein resides in the cytoplasm. It catalyses the reaction tRNA(Asp) + L-aspartate + ATP = L-aspartyl-tRNA(Asp) + AMP + diphosphate. In terms of biological role, catalyzes the attachment of L-aspartate to tRNA(Asp) in a two-step reaction: L-aspartate is first activated by ATP to form Asp-AMP and then transferred to the acceptor end of tRNA(Asp). This chain is Aspartate--tRNA ligase, found in Lactococcus lactis subsp. lactis (strain IL1403) (Streptococcus lactis).